Consider the following 507-residue polypeptide: Methionine--tRNA ligase (507 aa).

The 'HIGH' region motif lies at 12–22 (YYVNDVSHIGH). The 'KMSKS' region motif lies at 295–299 (KISKS). An ATP-binding site is contributed by K298.

Belongs to the class-I aminoacyl-tRNA synthetase family. MetG type 2B subfamily. As to quaternary structure, monomer.

It localises to the cytoplasm. The enzyme catalyses tRNA(Met) + L-methionine + ATP = L-methionyl-tRNA(Met) + AMP + diphosphate. Its function is as follows. Is required not only for elongation of protein synthesis but also for the initiation of all mRNA translation through initiator tRNA(fMet) aminoacylation. The protein is Methionine--tRNA ligase of Rickettsia typhi (strain ATCC VR-144 / Wilmington).